The following is an 81-amino-acid chain: Small ribosomal subunit protein bS18 (81 aa).

It belongs to the bacterial ribosomal protein bS18 family. Part of the 30S ribosomal subunit. Forms a tight heterodimer with protein bS6.

Functionally, binds as a heterodimer with protein bS6 to the central domain of the 16S rRNA, where it helps stabilize the platform of the 30S subunit. This chain is Small ribosomal subunit protein bS18, found in Chlamydia muridarum (strain MoPn / Nigg).